Here is a 213-residue protein sequence, read N- to C-terminus: Bacteriochlorophyll synthase 23 kDa chain (213 aa).

It functions in the pathway porphyrin-containing compound metabolism; bacteriochlorophyll biosynthesis (light-independent). This is Bacteriochlorophyll synthase 23 kDa chain (bchJ) from Rhodobacter capsulatus (strain ATCC BAA-309 / NBRC 16581 / SB1003).